We begin with the raw amino-acid sequence, 184 residues long: ATP synthase subunit b, chloroplastic (184 aa).

A helical transmembrane segment spans residues 27-49 (LATNPINLSVVLGVLIFFGKGVL).

It belongs to the ATPase B chain family. As to quaternary structure, F-type ATPases have 2 components, F(1) - the catalytic core - and F(0) - the membrane proton channel. F(1) has five subunits: alpha(3), beta(3), gamma(1), delta(1), epsilon(1). F(0) has four main subunits: a(1), b(1), b'(1) and c(10-14). The alpha and beta chains form an alternating ring which encloses part of the gamma chain. F(1) is attached to F(0) by a central stalk formed by the gamma and epsilon chains, while a peripheral stalk is formed by the delta, b and b' chains.

Its subcellular location is the plastid. The protein localises to the chloroplast thylakoid membrane. Its function is as follows. F(1)F(0) ATP synthase produces ATP from ADP in the presence of a proton or sodium gradient. F-type ATPases consist of two structural domains, F(1) containing the extramembraneous catalytic core and F(0) containing the membrane proton channel, linked together by a central stalk and a peripheral stalk. During catalysis, ATP synthesis in the catalytic domain of F(1) is coupled via a rotary mechanism of the central stalk subunits to proton translocation. Component of the F(0) channel, it forms part of the peripheral stalk, linking F(1) to F(0). The protein is ATP synthase subunit b, chloroplastic of Buxus microphylla (Littleleaf boxwood).